Reading from the N-terminus, the 94-residue chain is Co-chaperonin GroES (94 aa).

Belongs to the GroES chaperonin family. As to quaternary structure, heptamer of 7 subunits arranged in a ring. Interacts with the chaperonin GroEL.

Its subcellular location is the cytoplasm. Together with the chaperonin GroEL, plays an essential role in assisting protein folding. The GroEL-GroES system forms a nano-cage that allows encapsulation of the non-native substrate proteins and provides a physical environment optimized to promote and accelerate protein folding. GroES binds to the apical surface of the GroEL ring, thereby capping the opening of the GroEL channel. This Orientia tsutsugamushi (Rickettsia tsutsugamushi) protein is Co-chaperonin GroES.